Reading from the N-terminus, the 249-residue chain is DNA polymerase sliding clamp (249 aa).

It belongs to the PCNA family. In terms of assembly, homotrimer. The subunits circularize to form a toroid; DNA passes through its center. Replication factor C (RFC) is required to load the toroid on the DNA.

Its function is as follows. Sliding clamp subunit that acts as a moving platform for DNA processing. Responsible for tethering the catalytic subunit of DNA polymerase and other proteins to DNA during high-speed replication. In Thermococcus fumicolans, this protein is DNA polymerase sliding clamp.